We begin with the raw amino-acid sequence, 280 residues long: Mitochondrial outer membrane protein porin 2 (280 aa).

It belongs to the eukaryotic mitochondrial porin (TC 1.B.8.1) family. As to expression, expressed in roots, stems, leaves, palea, lemma and pollen.

Its subcellular location is the mitochondrion outer membrane. Its function is as follows. Forms a channel through the mitochondrial outer membrane that allows diffusion of small hydrophilic molecules. The channel adopts an open conformation at low or zero membrane potential and a closed conformation at potentials above 30-40 mV. The open state has a weak anion selectivity whereas the closed state is cation-selective. This Oryza sativa subsp. japonica (Rice) protein is Mitochondrial outer membrane protein porin 2 (VDAC2).